The primary structure comprises 502 residues: Probable cytosol aminopeptidase (502 aa).

Residues K275 and D280 each contribute to the Mn(2+) site. K287 is a catalytic residue. Mn(2+) contacts are provided by D298, D357, and E359. R361 is an active-site residue.

It belongs to the peptidase M17 family. The cofactor is Mn(2+).

The protein resides in the cytoplasm. It carries out the reaction Release of an N-terminal amino acid, Xaa-|-Yaa-, in which Xaa is preferably Leu, but may be other amino acids including Pro although not Arg or Lys, and Yaa may be Pro. Amino acid amides and methyl esters are also readily hydrolyzed, but rates on arylamides are exceedingly low.. The enzyme catalyses Release of an N-terminal amino acid, preferentially leucine, but not glutamic or aspartic acids.. Functionally, presumably involved in the processing and regular turnover of intracellular proteins. Catalyzes the removal of unsubstituted N-terminal amino acids from various peptides. The polypeptide is Probable cytosol aminopeptidase (Ralstonia pickettii (strain 12J)).